A 490-amino-acid chain; its full sequence is Probable cytosol aminopeptidase (490 aa).

Lys262 and Asp267 together coordinate Mn(2+). The active site involves Lys274. 3 residues coordinate Mn(2+): Asp285, Asp344, and Glu346. Arg348 is a catalytic residue.

Belongs to the peptidase M17 family. Mn(2+) serves as cofactor.

The protein resides in the cytoplasm. The enzyme catalyses Release of an N-terminal amino acid, Xaa-|-Yaa-, in which Xaa is preferably Leu, but may be other amino acids including Pro although not Arg or Lys, and Yaa may be Pro. Amino acid amides and methyl esters are also readily hydrolyzed, but rates on arylamides are exceedingly low.. It carries out the reaction Release of an N-terminal amino acid, preferentially leucine, but not glutamic or aspartic acids.. Its function is as follows. Presumably involved in the processing and regular turnover of intracellular proteins. Catalyzes the removal of unsubstituted N-terminal amino acids from various peptides. This Mannheimia succiniciproducens (strain KCTC 0769BP / MBEL55E) protein is Probable cytosol aminopeptidase.